Here is a 494-residue protein sequence, read N- to C-terminus: Acetyl-coenzyme A carboxylase carboxyl transferase subunit beta, chloroplastic (494 aa).

In terms of domain architecture, CoA carboxyltransferase N-terminal spans 230–494 (LWVQCENCYG…LHGFFPLNQN (265 aa)). The Zn(2+) site is built by cysteine 234, cysteine 237, cysteine 253, and cysteine 256. Residues 234–256 (CENCYGLNYKKFFRSKMNICEQC) form a C4-type zinc finger.

This sequence belongs to the AccD/PCCB family. Acetyl-CoA carboxylase is a heterohexamer composed of biotin carboxyl carrier protein, biotin carboxylase and 2 subunits each of ACCase subunit alpha and ACCase plastid-coded subunit beta (accD). Zn(2+) is required as a cofactor.

Its subcellular location is the plastid. The protein resides in the chloroplast stroma. The enzyme catalyses N(6)-carboxybiotinyl-L-lysyl-[protein] + acetyl-CoA = N(6)-biotinyl-L-lysyl-[protein] + malonyl-CoA. Its pathway is lipid metabolism; malonyl-CoA biosynthesis; malonyl-CoA from acetyl-CoA: step 1/1. In terms of biological role, component of the acetyl coenzyme A carboxylase (ACC) complex. Biotin carboxylase (BC) catalyzes the carboxylation of biotin on its carrier protein (BCCP) and then the CO(2) group is transferred by the transcarboxylase to acetyl-CoA to form malonyl-CoA. This Drimys granadensis protein is Acetyl-coenzyme A carboxylase carboxyl transferase subunit beta, chloroplastic.